Reading from the N-terminus, the 490-residue chain is Argininosuccinate lyase (490 aa).

Disordered stretches follow at residues 426-452 (DPES…LSAA) and 469-490 (ALAT…TAPE). Low complexity predominate over residues 440 to 452 (PAPESMAAALSAA). Residues 469 to 480 (ALATAADERERV) show a composition bias toward basic and acidic residues.

It belongs to the lyase 1 family. Argininosuccinate lyase subfamily.

The protein resides in the cytoplasm. It catalyses the reaction 2-(N(omega)-L-arginino)succinate = fumarate + L-arginine. The protein operates within amino-acid biosynthesis; L-arginine biosynthesis; L-arginine from L-ornithine and carbamoyl phosphate: step 3/3. This chain is Argininosuccinate lyase, found in Natronomonas pharaonis (strain ATCC 35678 / DSM 2160 / CIP 103997 / JCM 8858 / NBRC 14720 / NCIMB 2260 / Gabara) (Halobacterium pharaonis).